Here is a 1470-residue protein sequence, read N- to C-terminus: Transient receptor potential cation channel subfamily M member 2 (1470 aa).

Topologically, residues 1–725 (MDEAALEPTL…GELSVDNPHW (725 aa)) are cytoplasmic. Residues tyrosine 267, arginine 274, 305 to 308 (GPGT), and arginine 330 contribute to the ADP-D-ribose site. Residues 726 to 738 (KVLLCMIFFPLIY) lie within the membrane without spanning it. Residues 739–808 (TGFLTFRRDE…MSFLKSPQVK (70 aa)) are Cytoplasmic-facing. Residues 809–829 (FYWNIASYFGFLWLFAVVLMI) traverse the membrane as a helical segment. At 830–836 (DFQTSPS) the chain is on the extracellular side. The helical transmembrane segment at 837–857 (WRELLLYVWLTSLVCEEIRQL) threads the bilayer. Ca(2+) is bound by residues glutamate 853 and glutamine 856. The Cytoplasmic portion of the chain corresponds to 858-876 (YHDFDGSGFRRKAKMYIKD). Residues 877–897 (LWNILDVLSIVLFIAGLICRL) traverse the membrane as a helical segment. Asparagine 879 is a Ca(2+) binding site. Residues 898–905 (QASDTVFY) are Extracellular-facing. Residues 906–926 (IGKVILCIDFIIFCLRLMAIF) form a helical membrane-spanning segment. The Cytoplasmic portion of the chain corresponds to 927-941 (SISRTLGPKIIIVRR). The chain crosses the membrane as a helical span at residues 942–968 (MMLDLFFFMFLLSIWVVAYGVAKQGIL). Over 969 to 977 (IENEERLNW) the chain is Extracellular. An intramembrane region (pore-forming) is located at residues 978-1002 (IIRGAVYEPYITIFGNFPTNIDNTL). The Selectivity filter motif lies at 991–993 (FGN). Residues 1003 to 1034 (FDISSCSVNASDPLKPKCPMLNADNTPVFPEW) are Extracellular-facing. Cysteine 1008 and cysteine 1020 are disulfide-bonded. Asparagine 1011 is a glycosylation site (N-linked (GlcNAc...) asparagine). A helical membrane pass occupies residues 1035–1059 (LTIMMLCVYLLFANILLLNLLIAIF). Topologically, residues 1060 to 1087 (NYTFQEVQDNTDTIWKFQRYELIKEYHS) are cytoplasmic. Position 1084 (glutamate 1084) interacts with Ca(2+). Residues 1088 to 1105 (RPALPPPFILLSHLILFI) lie within the membrane without spanning it. The Cytoplasmic segment spans residues 1106-1470 (RGVFLRDLPQ…QIAHHHNTYF (365 aa)). A divergent Nudix hydrolase-like domain region spans residues 1157-1470 (HRIHDTAEKV…QIAHHHNTYF (314 aa)). Disordered stretches follow at residues 1215 to 1256 (KSKV…LQYP) and 1281 to 1314 (PPVY…GKGA). Residues 1231-1244 (DDGDSSGQETDDEE) are compositionally biased toward acidic residues. Polar residues predominate over residues 1283–1295 (VYNQQDSSESDTS). The ADP-D-ribose site is built by aspartate 1398 and arginine 1400.

Belongs to the transient receptor (TC 1.A.4) family. LTrpC subfamily. TRPM2 sub-subfamily. As to quaternary structure, homotetramer.

It localises to the cell membrane. The enzyme catalyses Ca(2+)(in) = Ca(2+)(out). It carries out the reaction Na(+)(in) = Na(+)(out). With respect to regulation, activated by intracellular ADP-ribose. Ca(2+) and PI(4,5)P2 are required for channel opening by ADP-ribose. Functionally, nonselective, voltage-independent cation channel that mediates Ca(2+) influx, leading to increased cytoplasmic Ca(2+) levels. Functions as a ligand-gated ion channel, gated by intracellular adenosine diphosphate ribose (ADP-ribose), Ca(2+), warm temperature, and oxidative stress. Binding of ADP-ribose to the cytoplasmic N-terminal region causes a conformation change; the channel is primed but still requires Ca(2+) binding to trigger channel opening. The protein is Transient receptor potential cation channel subfamily M member 2 of Danio rerio (Zebrafish).